We begin with the raw amino-acid sequence, 276 residues long: Aquaporin-1 (276 aa).

At 1–10 (MLDAEQKKNY) the chain is on the cytoplasmic side. The helical transmembrane segment at 11-31 (VAGAFGEFVGTAYFLFMGVGG) threads the bilayer. The Extracellular segment spans residues 32 to 46 (AVNFLNNAAGSPLPG). A helical membrane pass occupies residues 47 to 67 (FAIPFCFGFSLFVNVFIWAPI). Over 68–93 (SGGVFNPSITIALMATNPKDFPWYRG) the chain is Cytoplasmic. The NPA 1 motif lies at 73 to 75 (NPS). The chain crosses the membrane as a helical span at residues 94-114 (ILYIVSQFLGALFGSWLIDLI). Topologically, residues 115–133 (QPEAPNAATLLADGVSVAQ) are extracellular. Residues 134-154 (GLFMEMFATSVLTMAVLILAG) traverse the membrane as a helical segment. Residues 155-159 (ERYGK) are Cytoplasmic-facing. The chain crosses the membrane as a helical span at residues 160–180 (YLAPFGIGMSLFISALCAGPY). The Extracellular portion of the chain corresponds to 181-204 (TGASLNPARTLGPAIVANQYGRAH). An NPA 2 motif is present at residues 186-188 (NPA). A helical transmembrane segment spans residues 205–225 (WIYYVGPTLGSLLAAGYWHIL). The Cytoplasmic segment spans residues 226 to 276 (RILNIDVVDLKNVLNKCKKCGKEDPRISLKHCEECLKDDPKPEKYDIESQN).

Belongs to the MIP/aquaporin (TC 1.A.8) family.

The protein resides in the cell membrane. The enzyme catalyses H2O(in) = H2O(out). With respect to regulation, polyethylene glycol (PEG) stimulates whereas glycerol inhibits the aquaporin activity. Water channel required to facilitate the transport of water across membranes. Stimulates plant drought tolerance by facilitating the transport of water from the arbuscular mycorrhiza fungus to host plants. In Rhizophagus irregularis (Arbuscular mycorrhizal fungus), this protein is Aquaporin-1.